The primary structure comprises 378 residues: Ribosomal RNA large subunit methyltransferase G (378 aa).

It belongs to the methyltransferase superfamily. RlmG family.

The protein resides in the cytoplasm. The enzyme catalyses guanosine(1835) in 23S rRNA + S-adenosyl-L-methionine = N(2)-methylguanosine(1835) in 23S rRNA + S-adenosyl-L-homocysteine + H(+). In terms of biological role, specifically methylates the guanine in position 1835 (m2G1835) of 23S rRNA. This chain is Ribosomal RNA large subunit methyltransferase G, found in Shigella dysenteriae serotype 1 (strain Sd197).